A 239-amino-acid polypeptide reads, in one-letter code: tRNA (guanine-N(7)-)-methyltransferase (239 aa).

Residues glutamate 69, glutamate 94, aspartate 121, and aspartate 144 each contribute to the S-adenosyl-L-methionine site. The active site involves aspartate 144. Lysine 148 is a substrate binding site. Residues 150–155 are interaction with RNA; that stretch reads RHNKRR. Substrate-binding positions include aspartate 180 and 217–220; that span reads TKFE.

It belongs to the class I-like SAM-binding methyltransferase superfamily. TrmB family. Monomer.

It carries out the reaction guanosine(46) in tRNA + S-adenosyl-L-methionine = N(7)-methylguanosine(46) in tRNA + S-adenosyl-L-homocysteine. It participates in tRNA modification; N(7)-methylguanine-tRNA biosynthesis. In terms of biological role, catalyzes the formation of N(7)-methylguanine at position 46 (m7G46) in tRNA. The chain is tRNA (guanine-N(7)-)-methyltransferase from Cronobacter sakazakii (strain ATCC BAA-894) (Enterobacter sakazakii).